Here is a 218-residue protein sequence, read N- to C-terminus: Protein-methionine-sulfoxide reductase heme-binding subunit MsrQ (218 aa).

5 helical membrane passes run 14-34, 60-80, 86-106, 121-141, and 155-175; these read LVHA…WQVW, FLLI…AVVI, LGLY…TLDL, PYIT…ITST, and LHTL…WLVK.

It belongs to the MsrQ family. Heterodimer of a catalytic subunit (MsrP) and a heme-binding subunit (MsrQ). FMN is required as a cofactor. Heme b serves as cofactor.

The protein resides in the cell inner membrane. Functionally, part of the MsrPQ system that repairs oxidized periplasmic proteins containing methionine sulfoxide residues (Met-O), using respiratory chain electrons. Thus protects these proteins from oxidative-stress damage caused by reactive species of oxygen and chlorine generated by the host defense mechanisms. MsrPQ is essential for the maintenance of envelope integrity under bleach stress, rescuing a wide series of structurally unrelated periplasmic proteins from methionine oxidation. MsrQ provides electrons for reduction to the reductase catalytic subunit MsrP, using the quinone pool of the respiratory chain. The protein is Protein-methionine-sulfoxide reductase heme-binding subunit MsrQ of Xanthomonas euvesicatoria pv. vesicatoria (strain 85-10) (Xanthomonas campestris pv. vesicatoria).